A 198-amino-acid polypeptide reads, in one-letter code: UPF0314 protein Atu8092 (198 aa).

The next 3 helical transmembrane spans lie at 14-34, 64-84, and 150-170; these read LRWFGVAAGLLLLQIVILYAM, WYTPSHIIHGFLFYWFAWLLF, and VPVWLTVVIAIFFEIFTGWLI.

It belongs to the UPF0314 family.

The protein localises to the cell membrane. This Agrobacterium fabrum (strain C58 / ATCC 33970) (Agrobacterium tumefaciens (strain C58)) protein is UPF0314 protein Atu8092.